Consider the following 347-residue polypeptide: Phosphoribosylformylglycinamidine cyclo-ligase (347 aa).

The protein belongs to the AIR synthase family.

It is found in the cytoplasm. The catalysed reaction is 2-formamido-N(1)-(5-O-phospho-beta-D-ribosyl)acetamidine + ATP = 5-amino-1-(5-phospho-beta-D-ribosyl)imidazole + ADP + phosphate + H(+). It participates in purine metabolism; IMP biosynthesis via de novo pathway; 5-amino-1-(5-phospho-D-ribosyl)imidazole from N(2)-formyl-N(1)-(5-phospho-D-ribosyl)glycinamide: step 2/2. This Prochlorococcus marinus subsp. pastoris (strain CCMP1986 / NIES-2087 / MED4) protein is Phosphoribosylformylglycinamidine cyclo-ligase.